Consider the following 447-residue polypeptide: Beclin-2 (447 aa).

A coiled-coil region spans residues 169–228 (EALHAELCAELSSLEQEEARLTQELEDLDGHHARVAAELRAAQAESKELYKQHEQHRVEY). A required for homodimer formation region spans residues 186–256 (EARLTQELED…NQLTYALSQQ (71 aa)).

The protein belongs to the beclin family. Homodimer (via coiled-coil domain). Interacts (via coiled-coil domain) with ATG14 (via coiled-coil domain); this interaction is tighter than BECN2 self-association. Interacts with AMBRA1, UVRAG and PIK3C3/VPS34; these interactions are not disrupted by starvation. Does not interact with RUBCN. Interacts (via N-terminus) with GPRASP1/GASP1; the interaction is direct. As to expression, expressed in brain, skeletal muscle, placenta, thymus and uterus. Expressed at a lower level in liver, testis, stomach, and 17-day-old embryos.

It is found in the cytoplasm. In terms of biological role, involved in 2 distinct lysosomal degradation pathways: acts as a regulator of autophagy and as a regulator of G-protein coupled receptors turnover. Regulates degradation in lysosomes of a variety of G-protein coupled receptors via its interaction with GPRASP1/GASP1. In Mus musculus (Mouse), this protein is Beclin-2.